We begin with the raw amino-acid sequence, 309 residues long: Oxygen-dependent coproporphyrinogen-III oxidase (309 aa).

Position 94 (Ser94) interacts with substrate. Positions 98 and 108 each coordinate a divalent metal cation. The Proton donor role is filled by His108. 110 to 112 contacts substrate; that stretch reads NVR. A divalent metal cation-binding residues include His147 and His177. The interval 242–277 is important for dimerization; that stretch reads YVEFNLVWDRGTLFGLQTGGRTESILMSLPPLVRWE. 260–262 lines the substrate pocket; the sequence is GGR.

Belongs to the aerobic coproporphyrinogen-III oxidase family. In terms of assembly, homodimer. The cofactor is a divalent metal cation.

The protein localises to the cytoplasm. The enzyme catalyses coproporphyrinogen III + O2 + 2 H(+) = protoporphyrinogen IX + 2 CO2 + 2 H2O. It functions in the pathway porphyrin-containing compound metabolism; protoporphyrin-IX biosynthesis; protoporphyrinogen-IX from coproporphyrinogen-III (O2 route): step 1/1. Its function is as follows. Involved in the heme biosynthesis. Catalyzes the aerobic oxidative decarboxylation of propionate groups of rings A and B of coproporphyrinogen-III to yield the vinyl groups in protoporphyrinogen-IX. This chain is Oxygen-dependent coproporphyrinogen-III oxidase, found in Yersinia pseudotuberculosis serotype O:1b (strain IP 31758).